Reading from the N-terminus, the 450-residue chain is Signal recognition particle 54 kDa protein (450 aa).

Residues Gly107–Thr114, Asp188–Arg192, and Thr247–Asp250 each bind GTP.

It belongs to the GTP-binding SRP family. SRP54 subfamily. As to quaternary structure, part of the signal recognition particle protein translocation system, which is composed of SRP and FtsY. Archaeal SRP consists of a 7S RNA molecule of 300 nucleotides and two protein subunits: SRP54 and SRP19.

The protein resides in the cytoplasm. It catalyses the reaction GTP + H2O = GDP + phosphate + H(+). Its function is as follows. Involved in targeting and insertion of nascent membrane proteins into the cytoplasmic membrane. Binds to the hydrophobic signal sequence of the ribosome-nascent chain (RNC) as it emerges from the ribosomes. The SRP-RNC complex is then targeted to the cytoplasmic membrane where it interacts with the SRP receptor FtsY. The protein is Signal recognition particle 54 kDa protein of Methanococcus maripaludis (strain DSM 14266 / JCM 13030 / NBRC 101832 / S2 / LL).